Reading from the N-terminus, the 400-residue chain is Deoxyguanosinetriphosphate triphosphohydrolase-like protein (400 aa).

Residues 76–204 (RLTHTLEVAQ…VNIADPLAYC (129 aa)) enclose the HD domain.

The protein belongs to the dGTPase family. Type 2 subfamily.

In Syntrophus aciditrophicus (strain SB), this protein is Deoxyguanosinetriphosphate triphosphohydrolase-like protein.